The chain runs to 256 residues: GTP cyclohydrolase FolE2 (256 aa).

Belongs to the GTP cyclohydrolase IV family.

It catalyses the reaction GTP + H2O = 7,8-dihydroneopterin 3'-triphosphate + formate + H(+). Its pathway is cofactor biosynthesis; 7,8-dihydroneopterin triphosphate biosynthesis; 7,8-dihydroneopterin triphosphate from GTP: step 1/1. Its function is as follows. Converts GTP to 7,8-dihydroneopterin triphosphate. The chain is GTP cyclohydrolase FolE2 from Caldicellulosiruptor saccharolyticus (strain ATCC 43494 / DSM 8903 / Tp8T 6331).